Reading from the N-terminus, the 427-residue chain is GPI mannosyltransferase 2 (427 aa).

The next 8 membrane-spanning stretches (helical) occupy residues 7-27 (LTTV…FAPG), 119-139 (ATLL…ALTL), 164-184 (FLLA…GMLL), 197-217 (ITLA…FSVA), 247-267 (AVLF…YMHY), 318-338 (VPNF…TVYF), 350-370 (LVYI…VQII), and 404-424 (LYVN…ACFL).

This sequence belongs to the PIGV family.

The protein localises to the endoplasmic reticulum membrane. It functions in the pathway glycolipid biosynthesis; glycosylphosphatidylinositol-anchor biosynthesis. Its function is as follows. Mannosyltransferase involved in glycosylphosphatidylinositol-anchor biosynthesis. Transfers the second mannose to the glycosylphosphatidylinositol during GPI precursor assembly. This Eremothecium gossypii (strain ATCC 10895 / CBS 109.51 / FGSC 9923 / NRRL Y-1056) (Yeast) protein is GPI mannosyltransferase 2 (GPI18).